A 267-amino-acid chain; its full sequence is Acyl-[acyl-carrier-protein]--UDP-N-acetylglucosamine O-acyltransferase (267 aa).

This sequence belongs to the transferase hexapeptide repeat family. LpxA subfamily. As to quaternary structure, homotrimer.

The protein localises to the cytoplasm. The catalysed reaction is a (3R)-hydroxyacyl-[ACP] + UDP-N-acetyl-alpha-D-glucosamine = a UDP-3-O-[(3R)-3-hydroxyacyl]-N-acetyl-alpha-D-glucosamine + holo-[ACP]. It functions in the pathway glycolipid biosynthesis; lipid IV(A) biosynthesis; lipid IV(A) from (3R)-3-hydroxytetradecanoyl-[acyl-carrier-protein] and UDP-N-acetyl-alpha-D-glucosamine: step 1/6. Involved in the biosynthesis of lipid A, a phosphorylated glycolipid that anchors the lipopolysaccharide to the outer membrane of the cell. The polypeptide is Acyl-[acyl-carrier-protein]--UDP-N-acetylglucosamine O-acyltransferase (Cupriavidus necator (strain ATCC 17699 / DSM 428 / KCTC 22496 / NCIMB 10442 / H16 / Stanier 337) (Ralstonia eutropha)).